Consider the following 173-residue polypeptide: Putative 4-hydroxy-4-methyl-2-oxoglutarate aldolase (173 aa).

Substrate-binding positions include 89 to 92 (GGNL) and Arg-111. Asp-112 is a binding site for a divalent metal cation.

This sequence belongs to the class II aldolase/RraA-like family. Homotrimer. Requires a divalent metal cation as cofactor.

The enzyme catalyses 4-hydroxy-4-methyl-2-oxoglutarate = 2 pyruvate. It carries out the reaction oxaloacetate + H(+) = pyruvate + CO2. In terms of biological role, catalyzes the aldol cleavage of 4-hydroxy-4-methyl-2-oxoglutarate (HMG) into 2 molecules of pyruvate. Also contains a secondary oxaloacetate (OAA) decarboxylase activity due to the common pyruvate enolate transition state formed following C-C bond cleavage in the retro-aldol and decarboxylation reactions. This is Putative 4-hydroxy-4-methyl-2-oxoglutarate aldolase from Albidiferax ferrireducens (strain ATCC BAA-621 / DSM 15236 / T118) (Rhodoferax ferrireducens).